The chain runs to 443 residues: 23S rRNA (uracil(1939)-C(5))-methyltransferase RlmD (443 aa).

Residues 8 to 66 (KPLPAEPIAAHIESFAHDGKGIAHVDGRVVFVDGALPGEDVTFVYTEIKRDYAAGRVVE) enclose the TRAM domain. The [4Fe-4S] cluster site is built by Cys-79, Cys-85, Cys-88, and Cys-167. S-adenosyl-L-methionine is bound by residues Gln-276, Phe-305, Asn-310, Glu-326, Asp-353, and Asp-374. Residue Cys-400 is the Nucleophile of the active site.

The protein belongs to the class I-like SAM-binding methyltransferase superfamily. RNA M5U methyltransferase family. RlmD subfamily.

The catalysed reaction is uridine(1939) in 23S rRNA + S-adenosyl-L-methionine = 5-methyluridine(1939) in 23S rRNA + S-adenosyl-L-homocysteine + H(+). Its function is as follows. Catalyzes the formation of 5-methyl-uridine at position 1939 (m5U1939) in 23S rRNA. The sequence is that of 23S rRNA (uracil(1939)-C(5))-methyltransferase RlmD from Methylococcus capsulatus (strain ATCC 33009 / NCIMB 11132 / Bath).